A 453-amino-acid chain; its full sequence is MARLFGTDGIRALANGDLLTPELAMAVARAAAVVFTHGRVAKRRQVLGKRPVAIVARDPRISGDFLVAAISAGLASSGVDVLDAGVIPTPAVAFLVKNANADFGFMISASHNPGYDNGVKIFAHGGVKLPDVVEDRIEYFLDKQKLSPIGSKVGRITRFVDAEDRYQMHLLSTLFTRIDGVKVVIDCANGAASGVSPDVFKSAGAAVKVICADPNGVNINDGVGSAYPERLRAEVIRNSATLGLAFDGDADRCIAVDSNGNTVDGDQIMAILARSMQQRGTLRNKTLVTTIMSNIGLDRAMKKLGINLKRTQVGDRYVIEAMTQGGFNIGGEQSGHIILSDYSTAGDGILAGLHLCAEIIRTGKSLTDLASIMEIVPQVTANIETDDPTTLLNNKKIRHEISRIEKSLKGRVVIRPSGTEPLIRIMVEDLNPEKAERACSHLADFFKQEIQKS.

Catalysis depends on serine 110, which acts as the Phosphoserine intermediate. The Mg(2+) site is built by serine 110, aspartate 247, aspartate 249, and aspartate 251. Serine 110 bears the Phosphoserine mark.

The protein belongs to the phosphohexose mutase family. Requires Mg(2+) as cofactor. In terms of processing, activated by phosphorylation.

The enzyme catalyses alpha-D-glucosamine 1-phosphate = D-glucosamine 6-phosphate. Its function is as follows. Catalyzes the conversion of glucosamine-6-phosphate to glucosamine-1-phosphate. This Tropheryma whipplei (strain TW08/27) (Whipple's bacillus) protein is Phosphoglucosamine mutase.